A 488-amino-acid chain; its full sequence is UDP-N-acetylmuramoyl-L-alanyl-D-glutamate--2,6-diaminopimelate ligase (488 aa).

Ser29 is a UDP-N-acetyl-alpha-D-muramoyl-L-alanyl-D-glutamate binding site. Residue 108–114 participates in ATP binding; it reads GTSGKTS. Residues 150-151, Ser177, Gln183, and Arg185 contribute to the UDP-N-acetyl-alpha-D-muramoyl-L-alanyl-D-glutamate site; that span reads TT. Lys217 carries the post-translational modification N6-carboxylysine. Meso-2,6-diaminopimelate contacts are provided by residues Arg381, 405–408, Gly453, and Glu457; that span reads DNPR. The Meso-diaminopimelate recognition motif motif lies at 405 to 408; it reads DNPR.

The protein belongs to the MurCDEF family. MurE subfamily. It depends on Mg(2+) as a cofactor. Post-translationally, carboxylation is probably crucial for Mg(2+) binding and, consequently, for the gamma-phosphate positioning of ATP.

Its subcellular location is the cytoplasm. The enzyme catalyses UDP-N-acetyl-alpha-D-muramoyl-L-alanyl-D-glutamate + meso-2,6-diaminopimelate + ATP = UDP-N-acetyl-alpha-D-muramoyl-L-alanyl-gamma-D-glutamyl-meso-2,6-diaminopimelate + ADP + phosphate + H(+). The protein operates within cell wall biogenesis; peptidoglycan biosynthesis. In terms of biological role, catalyzes the addition of meso-diaminopimelic acid to the nucleotide precursor UDP-N-acetylmuramoyl-L-alanyl-D-glutamate (UMAG) in the biosynthesis of bacterial cell-wall peptidoglycan. The protein is UDP-N-acetylmuramoyl-L-alanyl-D-glutamate--2,6-diaminopimelate ligase of Brucella melitensis biotype 1 (strain ATCC 23456 / CCUG 17765 / NCTC 10094 / 16M).